The primary structure comprises 271 residues: MLLILKAIILAIVEGLTEFVPVSSTGHLILVSDVINFKGDYANLFNVVIQLGAILAVVVVYWDKLLNSVKDIFAPDRRGLRFWINIVVACIPAVIFGFSLDDYIDKYLFNPITVAIGLVIGGILMIIVENKYRRRSKTKNIYDMKLRQSIFVGMFQCLALWPGMSRSASTIMGGWIAGLSPVVAAEFSFFLAIPVMVGASGLKLVKSGFYMTNIEFIALIVGFVGAFLVSLVVIEKFIKFLQKKPMRIFAIYRIFIGAILLILAIFKIVTI.

Helical transmembrane passes span 2 to 22 (LLILKAIILAIVEGLTEFVPV), 42 to 62 (ANLFNVVIQLGAILAVVVVYW), 80 to 100 (LRFWINIVVACIPAVIFGFSL), 108 to 128 (LFNPITVAIGLVIGGILMIIV), 149 to 168 (SIFVGMFQCLALWPGMSRSA), 175 to 195 (WIAGLSPVVAAEFSFFLAIPV), 214 to 234 (IEFIALIVGFVGAFLVSLVVI), and 248 to 268 (IFAIYRIFIGAILLILAIFKI).

This sequence belongs to the UppP family.

The protein localises to the cell membrane. It carries out the reaction di-trans,octa-cis-undecaprenyl diphosphate + H2O = di-trans,octa-cis-undecaprenyl phosphate + phosphate + H(+). In terms of biological role, catalyzes the dephosphorylation of undecaprenyl diphosphate (UPP). Confers resistance to bacitracin. The protein is Undecaprenyl-diphosphatase of Clostridium tetani (strain Massachusetts / E88).